The following is a 391-amino-acid chain: Trehalose-phosphate phosphatase (391 aa).

Asp-147 functions as the Nucleophile in the catalytic mechanism. 3 residues coordinate Mg(2+): Asp-147, Asp-149, and Asp-330. 147–149 (DFD) lines the substrate pocket.

This sequence belongs to the trehalose phosphatase family. It depends on Mg(2+) as a cofactor.

The catalysed reaction is alpha,alpha-trehalose 6-phosphate + H2O = alpha,alpha-trehalose + phosphate. Its pathway is glycan biosynthesis; trehalose biosynthesis. Its function is as follows. Removes the phosphate from trehalose 6-phosphate to produce free trehalose. The sequence is that of Trehalose-phosphate phosphatase (otsB) from Mycobacterium bovis (strain ATCC BAA-935 / AF2122/97).